The chain runs to 1044 residues: Pre-mRNA-splicing factor ATP-dependent RNA helicase DHX16 (1044 aa).

Disordered stretches follow at residues 101 to 210 (EDSE…AYEE) and 374 to 394 (LQGNEEPSAPPTSTQAQQKES). Serine 103, serine 106, and serine 107 each carry phosphoserine. The segment covering 119–130 (QKKRKKRKHLRK) has biased composition (basic residues). Residues 134-143 (EEEEEEEEEA) show a composition bias toward acidic residues. The residue at position 163 (serine 163) is a Phosphoserine. Basic and acidic residues predominate over residues 169 to 210 (RTERERLQDLEERDAFAERVRQRDKDRTRNVLERSDKKAYEE). The Helicase ATP-binding domain occupies 412 to 576 (LAAIANHQVL…FDDAPVFRIP (165 aa)). 425–432 (GETGSGKT) contributes to the ATP binding site. The short motif at 523–526 (DEAH) is the DEAH box element. Residues 601–774 (SVLQIHVTQP…NVVLLLKSLG (174 aa)) enclose the Helicase C-terminal domain. Threonine 715 carries the post-translational modification Phosphothreonine.

The protein belongs to the DEAD box helicase family. DEAH subfamily. DDX16/PRP8 sub-subfamily. As to quaternary structure, component of pre-catalytic spliceosome complexes. Component of the minor spliceosome, which splices U12-type introns. Interacts with GPKOW. Interacts with TRIM6. Interacts with RIGI.

The protein localises to the nucleus. Its subcellular location is the nucleoplasm. The protein resides in the cytoplasm. The catalysed reaction is ATP + H2O = ADP + phosphate + H(+). Its function is as follows. Required for pre-mRNA splicing as a component of the spliceosome. Contributes to pre-mRNA splicing after spliceosome formation and prior to the first transesterification reaction. As a component of the minor spliceosome, involved in the splicing of U12-type introns in pre-mRNAs. Also plays a role in innate antiviral response by acting as a pattern recognition receptor sensing splicing signals in viral RNA. Mechanistically, TRIM6 promotes the interaction between unanchored 'Lys-48'-polyubiquitin chains and DHX16, leading to DHX16 interaction with RIGI and ssRNA to amplify RIGI-dependent innate antiviral immune responses. This is Pre-mRNA-splicing factor ATP-dependent RNA helicase DHX16 (DHX16) from Pan troglodytes (Chimpanzee).